The sequence spans 304 residues: Acetylglutamate kinase (304 aa).

Substrate contacts are provided by residues 77–78, R99, and N193; that span reads GG.

This sequence belongs to the acetylglutamate kinase family. ArgB subfamily.

Its subcellular location is the cytoplasm. It carries out the reaction N-acetyl-L-glutamate + ATP = N-acetyl-L-glutamyl 5-phosphate + ADP. The protein operates within amino-acid biosynthesis; L-arginine biosynthesis; N(2)-acetyl-L-ornithine from L-glutamate: step 2/4. Functionally, catalyzes the ATP-dependent phosphorylation of N-acetyl-L-glutamate. This chain is Acetylglutamate kinase, found in Pelodictyon phaeoclathratiforme (strain DSM 5477 / BU-1).